A 389-amino-acid polypeptide reads, in one-letter code: Carbamoyl phosphate synthase small chain (389 aa).

A CPSase region spans residues 1 to 199; it reads MFNPAILVLA…AGKPFNLQTT (199 aa). Ser50, Gly251, and Gly253 together coordinate L-glutamine. A Glutamine amidotransferase type-1 domain is found at 203–389; the sequence is HVVAYDFGIK…FINAVQATKA (187 aa). Catalysis depends on Cys279, which acts as the Nucleophile. The L-glutamine site is built by Leu280, Gln283, Asn321, Gly323, and Phe324. Active-site residues include His363 and Glu365.

This sequence belongs to the CarA family. As to quaternary structure, composed of two chains; the small (or glutamine) chain promotes the hydrolysis of glutamine to ammonia, which is used by the large (or ammonia) chain to synthesize carbamoyl phosphate. Tetramer of heterodimers (alpha,beta)4.

It carries out the reaction hydrogencarbonate + L-glutamine + 2 ATP + H2O = carbamoyl phosphate + L-glutamate + 2 ADP + phosphate + 2 H(+). It catalyses the reaction L-glutamine + H2O = L-glutamate + NH4(+). It participates in amino-acid biosynthesis; L-arginine biosynthesis; carbamoyl phosphate from bicarbonate: step 1/1. It functions in the pathway pyrimidine metabolism; UMP biosynthesis via de novo pathway; (S)-dihydroorotate from bicarbonate: step 1/3. Its function is as follows. Small subunit of the glutamine-dependent carbamoyl phosphate synthetase (CPSase). CPSase catalyzes the formation of carbamoyl phosphate from the ammonia moiety of glutamine, carbonate, and phosphate donated by ATP, constituting the first step of 2 biosynthetic pathways, one leading to arginine and/or urea and the other to pyrimidine nucleotides. The small subunit (glutamine amidotransferase) binds and cleaves glutamine to supply the large subunit with the substrate ammonia. This is Carbamoyl phosphate synthase small chain from Haemophilus ducreyi (strain 35000HP / ATCC 700724).